Reading from the N-terminus, the 410-residue chain is Dihydrolipoyllysine-residue acetyltransferase component of pyruvate dehydrogenase complex (410 aa).

The Lipoyl-binding domain maps to 1–69 (MPDIGTDLVE…TTGSLIAILN (69 aa)). N6-lipoyllysine is present on lysine 35. Positions 81 to 100 (SSSYSFKNSKNTSTNSNLGN) are disordered. One can recognise a Peripheral subunit-binding (PSBD) domain in the interval 113–150 (HATPTVRRLARKFDIKLENITGTGRKGRILKEDVISYK). Residue histidine 383 is part of the active site.

The protein belongs to the 2-oxoacid dehydrogenase family. Forms a 24-polypeptide structural core with octahedral symmetry. (R)-lipoate serves as cofactor.

The catalysed reaction is N(6)-[(R)-dihydrolipoyl]-L-lysyl-[protein] + acetyl-CoA = N(6)-[(R)-S(8)-acetyldihydrolipoyl]-L-lysyl-[protein] + CoA. The pyruvate dehydrogenase complex catalyzes the overall conversion of pyruvate to acetyl-CoA and CO(2). It contains multiple copies of three enzymatic components: pyruvate dehydrogenase (E1), dihydrolipoamide acetyltransferase (E2) and lipoamide dehydrogenase (E3). The sequence is that of Dihydrolipoyllysine-residue acetyltransferase component of pyruvate dehydrogenase complex (aceF) from Buchnera aphidicola subsp. Baizongia pistaciae (strain Bp).